Consider the following 204-residue polypeptide: Minor allergen Alt a 7 (204 aa).

One can recognise a Flavodoxin-like domain in the interval 5–195 (IAIVYYSMYG…NIAQAQGKAF (191 aa)).

It belongs to the WrbA family.

It localises to the cytoplasm. In Alternaria alternata (Alternaria rot fungus), this protein is Minor allergen Alt a 7 (ALTA7).